We begin with the raw amino-acid sequence, 796 residues long: Vacuolar protein sorting-associated protein 35 (796 aa).

Ser7 carries the phosphoserine modification. Interaction with SNX3 regions lie at residues 25–44 and 205–215; these read VQSFQMKRCLDKNKLMDALK and DREKRERERQE. The interval 438 to 796 is interaction with SLC11A2; sequence CYVLSNVLDY…EGPIYEGLIL (359 aa). The interval 500-693 is interaction with IGF2R cytoplasmic domain; it reads SEDPDQQYLI…DKNGEELHGG (194 aa). At Ser783 the chain carries Phosphoserine. At Tyr791 the chain carries Phosphotyrosine.

This sequence belongs to the VPS35 family. In terms of assembly, component of the heterotrimeric retromer cargo-selective complex (CSC), also decribed as vacuolar protein sorting subcomplex (VPS), formed by VPS26 (VPS26A or VPS26B), VPS29 and VPS35. The CSC has a highly elongated structure with VPS26 and VPS29 binding independently at opposite distal ends of VPS35 as central platform. The CSC is believed to associate with variable sorting nexins to form functionally distinct retromer complex variants. The originally described retromer complex (also called SNX-BAR retromer) is a pentamer containing the CSC and a heterodimeric membrane-deforming subcomplex formed between SNX1 or SNX2 and SNX5 or SNX6 (also called SNX-BAR subcomplex); the respective CSC and SNX-BAR subcomplexes associate with low affinity. The CSC associates with SNX3 to form a SNX3-retromer complex. The CSC associates with SNX27, the WASH complex and the SNX-BAR subcomplex to form the SNX27-retromer complex. Interacts with VPS26A, VPS26B, VPS29, SNX1, SNX2, IGF2R, SNX3, GOLPH3, LRRK2, SLC11A2, WASHC2A, WASHC2C, FKBP15, WASHC1, RAB7A, SNX27, WASHC5, EHD1. Interacts with MAGEL2; leading to recruitment of the TRIM27:MAGEL2 E3 ubiquitin ligase complex retromer-containing endosomes. Interacts with SORCS2. (Microbial infection) Interacts with human papillomavirus 16 minor capsid protein L2 (via C-terminus); this interaction mediates the transport of the capsid from the early endosome to the Golgi apparatus. As to expression, ubiquitous. Highly expressed in heart, brain, placenta, skeletal muscle, spleen, thymus, testis, ovary, small intestine, kidney and colon.

The protein localises to the cytoplasm. Its subcellular location is the membrane. It localises to the endosome. The protein resides in the early endosome. It is found in the late endosome. Acts as a component of the retromer cargo-selective complex (CSC). The CSC is believed to be the core functional component of retromer or respective retromer complex variants acting to prevent missorting of selected transmembrane cargo proteins into the lysosomal degradation pathway. The recruitment of the CSC to the endosomal membrane involves RAB7A and SNX3. The CSC seems to associate with the cytoplasmic domain of cargo proteins predominantly via VPS35; however, these interactions seem to be of low affinity and retromer SNX proteins may also contribute to cargo selectivity thus questioning the classical function of the CSC. The SNX-BAR retromer mediates retrograde transport of cargo proteins from endosomes to the trans-Golgi network (TGN) and is involved in endosome-to-plasma membrane transport for cargo protein recycling. The SNX3-retromer mediates the retrograde endosome-to-TGN transport of WLS distinct from the SNX-BAR retromer pathway. The SNX27-retromer is believed to be involved in endosome-to-plasma membrane trafficking and recycling of a broad spectrum of cargo proteins. The CSC seems to act as recruitment hub for other proteins, such as the WASH complex and TBC1D5. Required for retrograde transport of lysosomal enzyme receptor IGF2R and SLC11A2. Required to regulate transcytosis of the polymeric immunoglobulin receptor (pIgR-pIgA). Required for endosomal localization of WASHC2C. Mediates the association of the CSC with the WASH complex via WASHC2. Required for the endosomal localization of TBC1D5. Its function is as follows. (Microbial infection) The heterotrimeric retromer cargo-selective complex (CSC) mediates the exit of human papillomavirus from the early endosome and the delivery to the Golgi apparatus. The sequence is that of Vacuolar protein sorting-associated protein 35 from Homo sapiens (Human).